The primary structure comprises 564 residues: MKRLNERSRMVTEGVARAPNRSMYYAMGYEEKDFVKPMVGVANGHSTITPCNSGLQKLADAAVEALEAAGAKAQVFGTPTVSDGIGMGTEGMKYSLVSREVIADSIEVCVNGLWQDGVVVIGGCDKNMPGGMMALARTNVPGIYVYGGTIKPGHFKGKELNIVSAFEAVGEFTSGRLSEEDLKGVEQHACPGSGSCGGMYTANTMSSSFEALGMSLPYSSTMANVDAEKVASAAESARVLVEAVKNNLRPRDIITKKSVENAVSVIMAVGGSTNAVLHFLAITSAAEIDWTIDDFERIRKQVPVIVDMKPSGTYLATDLHQAGGIPQVMKILLDGGLLHGDCITITGKTIAEVLKDVPSVPRADQKVIRTLDNPLYKQGHLAILKGNISPEGCVAKITGLKNPSITGPARVFDSEDDAMAAIMAQKIKDGDIVVIRYEGPKGGPGMREMLAPTSALVGQGLGESVGLITDGRFSGGTWGMVVGHVAPEAFVGGTIALINEGDSVTIDAHQLLIQLNVSEEEIAKRRAAWKQPKPRYTRGLLAKYASLASSASKGAVTDLNLDLT.

Residue cysteine 51 coordinates [2Fe-2S] cluster. Aspartate 83 is a Mg(2+) binding site. Position 124 (cysteine 124) interacts with [2Fe-2S] cluster. Aspartate 125 and lysine 126 together coordinate Mg(2+). Position 126 is an N6-carboxylysine (lysine 126). Cysteine 196 is a [2Fe-2S] cluster binding site. Glutamate 448 serves as a coordination point for Mg(2+). The Proton acceptor role is filled by serine 474.

The protein belongs to the IlvD/Edd family. Homodimer. The cofactor is [2Fe-2S] cluster. It depends on Mg(2+) as a cofactor.

It carries out the reaction (2R)-2,3-dihydroxy-3-methylbutanoate = 3-methyl-2-oxobutanoate + H2O. It catalyses the reaction (2R,3R)-2,3-dihydroxy-3-methylpentanoate = (S)-3-methyl-2-oxopentanoate + H2O. Its pathway is amino-acid biosynthesis; L-isoleucine biosynthesis; L-isoleucine from 2-oxobutanoate: step 3/4. It participates in amino-acid biosynthesis; L-valine biosynthesis; L-valine from pyruvate: step 3/4. Its function is as follows. Functions in the biosynthesis of branched-chain amino acids. Catalyzes the dehydration of (2R,3R)-2,3-dihydroxy-3-methylpentanoate (2,3-dihydroxy-3-methylvalerate) into 2-oxo-3-methylpentanoate (2-oxo-3-methylvalerate) and of (2R)-2,3-dihydroxy-3-methylbutanoate (2,3-dihydroxyisovalerate) into 2-oxo-3-methylbutanoate (2-oxoisovalerate), the penultimate precursor to L-isoleucine and L-valine, respectively. The chain is Dihydroxy-acid dehydratase from Polynucleobacter asymbioticus (strain DSM 18221 / CIP 109841 / QLW-P1DMWA-1) (Polynucleobacter necessarius subsp. asymbioticus).